The following is a 319-amino-acid chain: tRNA (guanine-N(7)-)-methyltransferase (319 aa).

A disordered region spans residues methionine 1–proline 44. Positions glutamine 14–alanine 26 are enriched in low complexity. The S-adenosyl-L-methionine site is built by glutamate 103, glutamate 128, asparagine 155, and aspartate 178. The active site involves aspartate 178. Lysine 182 and aspartate 214 together coordinate substrate. Residues alanine 262–tryptophan 288 are disordered. Position 298–301 (threonine 298–glutamate 301) interacts with substrate.

Belongs to the class I-like SAM-binding methyltransferase superfamily. TrmB family.

The enzyme catalyses guanosine(46) in tRNA + S-adenosyl-L-methionine = N(7)-methylguanosine(46) in tRNA + S-adenosyl-L-homocysteine. It participates in tRNA modification; N(7)-methylguanine-tRNA biosynthesis. Catalyzes the formation of N(7)-methylguanine at position 46 (m7G46) in tRNA. The chain is tRNA (guanine-N(7)-)-methyltransferase from Arthrobacter sp. (strain FB24).